Consider the following 832-residue polypeptide: SID1 transmembrane family member 2 (832 aa).

The first 15 residues, 1–15 (MIAWRLPLCVLLVAA), serve as a signal peptide directing secretion. The Extracellular portion of the chain corresponds to 16-293 (VESHLGALGP…VSQAVTSEAY (278 aa)). N-linked (GlcNAc...) asparagine glycosylation is found at Asn-27, Asn-54, Asn-60, Asn-123, Asn-141, and Asn-165. Residues 294 to 314 (VGGMLFCLGIFLSFYLLTVLL) traverse the membrane as a helical segment. Over 315 to 447 (ACWENWRQRK…DKRVLRKKYQ (133 aa)) the chain is Cytoplasmic. 3 positions are modified to phosphoserine: Ser-401, Ser-403, and Ser-404. The chain crosses the membrane as a helical span at residues 448 to 468 (IYFWNIATIAVFYALPVVQLV). Topologically, residues 469-499 (ITYQTVVNVTGNQDICYYNFLCAHPLGNLSA) are extracellular. 2 N-linked (GlcNAc...) asparagine glycosylation sites follow: Asn-476 and Asn-496. Residues 500-520 (FNNILSNLGYILLGLLFLLII) form a helical membrane-spanning segment. Topologically, residues 521 to 546 (LQREINHNRALLRNDLYALECGIPKH) are cytoplasmic. Residues 547–567 (FGLFYAMGTALMMEGLLSACY) traverse the membrane as a helical segment. At 568-605 (HVCPNYTNFQFDTSFMYMIAGLCMLKLYQKRHPDINAS) the chain is on the extracellular side. 2 N-linked (GlcNAc...) asparagine glycosylation sites follow: Asn-572 and Asn-603. Residues 606 to 626 (AYSAYACLAIVIFFSVLGVVF) form a helical membrane-spanning segment. The Cytoplasmic segment spans residues 627-631 (GKGNT). The helical transmembrane segment at 632 to 652 (AFWIVFSVIHIISTLLLSTQL) threads the bilayer. The Extracellular segment spans residues 653 to 688 (YYMGRWKLDSGIFRRILHVLYTDCIRQCSGPLYTDR). A helical transmembrane segment spans residues 689 to 709 (MVLLVMGNIINWSLAAYGLIM). The Cytoplasmic segment spans residues 710-715 (RPNDFA). The helical transmembrane segment at 716-736 (SYLLAIGICNLLLYFAFYIIM) threads the bilayer. At 737–746 (KLRSGERIKL) the chain is on the extracellular side. A helical transmembrane segment spans residues 747–767 (IPLLCIVCTSVVWGFALFFFF). Residues 768–796 (QGLSTWQKTPAESREHNRDCILLDFFDDH) lie on the Cytoplasmic side of the membrane. A helical transmembrane segment spans residues 797-817 (DIWHFLSSIAMFGSFLVLLTL). Over 818–832 (DDDLDTVQRDKIYVF) the chain is Extracellular.

This sequence belongs to the SID1 family. Interacts with adapter protein complex 1 (AP-1) and AP-2, but not AP-3 and AP-4. Interacts with LAMP2. In terms of processing, glycosylated. In terms of tissue distribution, highly expressed in the liver, brain, kidney and intestine (at protein level).

The protein localises to the lysosome membrane. It localises to the cell membrane. In terms of biological role, mediates the translocation of RNA and DNA across the lysosomal membrane during RNA and DNA autophagy (RDA), a process in which RNA or DNA is directly imported into lysosomes in an ATP-dependent manner, and degraded. Involved in the uptake of single-stranded oligonucleotides by living cells, a process called gymnosis. In vitro, mediates the uptake of linear DNA more efficiently than that of circular DNA, but exhibits similar uptake efficacy toward RNA and DNA. Binds long double-stranded RNA (dsRNA) (500 - 700 base pairs), but not dsRNA shorter than 100 bp. The sequence is that of SID1 transmembrane family member 2 (Sidt2) from Rattus norvegicus (Rat).